A 156-amino-acid polypeptide reads, in one-letter code: SsrA-binding protein (156 aa).

The protein belongs to the SmpB family.

It is found in the cytoplasm. Required for rescue of stalled ribosomes mediated by trans-translation. Binds to transfer-messenger RNA (tmRNA), required for stable association of tmRNA with ribosomes. tmRNA and SmpB together mimic tRNA shape, replacing the anticodon stem-loop with SmpB. tmRNA is encoded by the ssrA gene; the 2 termini fold to resemble tRNA(Ala) and it encodes a 'tag peptide', a short internal open reading frame. During trans-translation Ala-aminoacylated tmRNA acts like a tRNA, entering the A-site of stalled ribosomes, displacing the stalled mRNA. The ribosome then switches to translate the ORF on the tmRNA; the nascent peptide is terminated with the 'tag peptide' encoded by the tmRNA and targeted for degradation. The ribosome is freed to recommence translation, which seems to be the essential function of trans-translation. This Desulfitobacterium hafniense (strain DSM 10664 / DCB-2) protein is SsrA-binding protein.